A 330-amino-acid chain; its full sequence is Transcription factor TGA5 (330 aa).

Positions 1–13 are enriched in polar residues; the sequence is MGDTSPRTSVSTD. Residues 1–64 form a disordered region; it reads MGDTSPRTSV…REAARKSRLR (64 aa). Residues 35–47 show a composition bias toward basic and acidic residues; the sequence is SSDRSKSKMDQKT. The bZIP domain occupies 44-107; that stretch reads DQKTLRRLAQ…SSGDQAHSTA (64 aa). 2 coiled-coil regions span residues 45 to 98 and 211 to 244; these read QKTL…FISS and EQQSLDINNLQQSSQQAEDALSQGMDNLQQSLAD. Positions 46 to 66 are basic motif; the sequence is KTLRRLAQNREAARKSRLRKK. The leucine-zipper stretch occupies residues 72–86; it reads LENSRLKLTQLEQEL. Residues 111-327 enclose the DOG1 domain; it reads AMAFDVEYRR…RALSSLWLAR (217 aa).

This sequence belongs to the bZIP family. In terms of assembly, binds DNA as a dimer. Interaction with the Dof domain protein OBP1 enhances the binding to the ocs element. Interacts with NPR1, NPR3 and NPR4. As to expression, predominantly expressed in roots.

Its subcellular location is the nucleus. Its function is as follows. Transcriptional activator that binds specifically to the DNA sequence 5'-TGACG-3'. Recognizes ocs elements like the as-1 motif of the cauliflower mosaic virus 35S promoter. Binding to the as-1-like cis elements mediate auxin- and salicylic acid-inducible transcription. May be involved in the induction of the systemic acquired resistance (SAR) via its interaction with NPR1. Could also bind to the Hex-motif (5'-TGACGTGG-3') another cis-acting element found in plant histone promoters. This Arabidopsis thaliana (Mouse-ear cress) protein is Transcription factor TGA5 (TGA5).